Reading from the N-terminus, the 117-residue chain is MITRIDVTNRFSEVAIYNGIAYFAGQVPTDESKDAYQQTQQVLSEIDKYLAKSNTDKSRILMATVYLANMADYTEMNRAWDEWVAPNNAPPRAAIEARLANPNWKVEIVITAAINHQ.

It belongs to the RutC family.

The sequence is that of RutC family protein HD_0322 from Haemophilus ducreyi (strain 35000HP / ATCC 700724).